Here is a 334-residue protein sequence, read N- to C-terminus: Protein-methionine-sulfoxide reductase catalytic subunit MsrP (334 aa).

Residues 1–44 (MKKNQFLKESDVTAESVFFMKRRQVLKALGISATALSLPHAAHA) constitute a signal peptide (tat-type signal). Mo-molybdopterin-binding positions include Asn88, 91-92 (YE), Cys146, Thr181, Asn233, Arg238, and 249-251 (GIK).

This sequence belongs to the MsrP family. As to quaternary structure, heterodimer of a catalytic subunit (MsrP) and a heme-binding subunit (MsrQ). The cofactor is Mo-molybdopterin. In terms of processing, predicted to be exported by the Tat system. The position of the signal peptide cleavage has not been experimentally proven.

The protein resides in the periplasm. It carries out the reaction L-methionyl-[protein] + a quinone + H2O = L-methionyl-(S)-S-oxide-[protein] + a quinol. The enzyme catalyses L-methionyl-[protein] + a quinone + H2O = L-methionyl-(R)-S-oxide-[protein] + a quinol. Functionally, part of the MsrPQ system that repairs oxidized periplasmic proteins containing methionine sulfoxide residues (Met-O), using respiratory chain electrons. Thus protects these proteins from oxidative-stress damage caused by reactive species of oxygen and chlorine generated by the host defense mechanisms. MsrPQ is essential for the maintenance of envelope integrity under bleach stress, rescuing a wide series of structurally unrelated periplasmic proteins from methionine oxidation, including the primary periplasmic chaperone SurA and the lipoprotein Pal. The catalytic subunit MsrP is non-stereospecific, being able to reduce both (R-) and (S-) diastereoisomers of methionine sulfoxide. This is Protein-methionine-sulfoxide reductase catalytic subunit MsrP from Escherichia coli (strain K12 / MC4100 / BW2952).